The primary structure comprises 418 residues: Protein fuzzy homolog (418 aa).

It belongs to the fuzzy family. Component of the CPLANE (ciliogenesis and planar polarity effectors) complex, composed of INTU, FUZ and WDPCP. Interacts with CPLANE2. Interacts with CPLANE1.

Its subcellular location is the cytoplasm. The protein localises to the cytoskeleton. The protein resides in the cilium basal body. Its function is as follows. Probable planar cell polarity effector involved in cilium biogenesis. May regulate protein and membrane transport to the cilium. Proposed to function as core component of the CPLANE (ciliogenesis and planar polarity effectors) complex involved in the recruitment of peripheral IFT-A proteins to basal bodies. May regulate the morphogenesis of hair follicles which depends on functional primary cilia. Binds phosphatidylinositol 3-phosphate with highest affinity, followed by phosphatidylinositol 4-phosphate and phosphatidylinositol 5-phosphate. This Homo sapiens (Human) protein is Protein fuzzy homolog (FUZ).